The sequence spans 495 residues: Aspartyl/glutamyl-tRNA(Asn/Gln) amidotransferase subunit B (495 aa).

Belongs to the GatB/GatE family. GatB subfamily. In terms of assembly, heterotrimer of A, B and C subunits.

It catalyses the reaction L-glutamyl-tRNA(Gln) + L-glutamine + ATP + H2O = L-glutaminyl-tRNA(Gln) + L-glutamate + ADP + phosphate + H(+). The enzyme catalyses L-aspartyl-tRNA(Asn) + L-glutamine + ATP + H2O = L-asparaginyl-tRNA(Asn) + L-glutamate + ADP + phosphate + 2 H(+). Its function is as follows. Allows the formation of correctly charged Asn-tRNA(Asn) or Gln-tRNA(Gln) through the transamidation of misacylated Asp-tRNA(Asn) or Glu-tRNA(Gln) in organisms which lack either or both of asparaginyl-tRNA or glutaminyl-tRNA synthetases. The reaction takes place in the presence of glutamine and ATP through an activated phospho-Asp-tRNA(Asn) or phospho-Glu-tRNA(Gln). This is Aspartyl/glutamyl-tRNA(Asn/Gln) amidotransferase subunit B from Gloeothece citriformis (strain PCC 7424) (Cyanothece sp. (strain PCC 7424)).